The sequence spans 431 residues: O-methyltransferase gliM (431 aa).

Positions 20-85 (EFKAIVNDLR…SMDKLQLQLV (66 aa)) form a coiled coil. S-adenosyl-L-methionine contacts are provided by residues Asp287 and 319 to 321 (GDF). His338 functions as the Proton acceptor in the catalytic mechanism.

Belongs to the class I-like SAM-binding methyltransferase superfamily. Cation-independent O-methyltransferase family. COMT subfamily.

Its pathway is mycotoxin biosynthesis. Functionally, O-methyltransferase; part of the gene cluster that mediates the biosynthesis of gliotoxin, a member of the epipolythiodioxopiperazine (ETP) class of toxins characterized by a disulfide bridged cyclic dipeptide. The first step in gliotoxin biosynthesis is the condensation of serine and phenylalanine to form the cyclo-L-phenylalanyl-L-serine diketopiperazine (DKP) by the NRPS gliP. GliP is also able to produce the DKP cyclo-L-tryptophanyl-L-serine, suggesting that the substrate specificity of the first adenylation (A) domain in gliP is sufficiently relaxed to accommodate both L-Phe and L-Trp. The cytochrome P450 monooxygenase gliC has been shown to catalyze the subsequent hydroxylation of the alpha-carbon of L-Phe in cyclo-L-phenylalanyl-L-serine whereas the second cytochrome P450 enzyme, gliF, is presumably involved in the modification of the DKP side chain. The glutathione S-transferase (GST) gliG then forms a bis-glutathionylated biosynthetic intermediate which is responsible for the sulfurization of gliotoxin. This bis-glutathionylated intermediate is subsequently processed by the gamma-glutamyl cyclotransferase gliK to remove both gamma-glutamyl moieties. Subsequent processing via gliI yields a biosynthetic intermediate, which is N-methylated via the N-methyltransferase gliN, before the gliotoxin oxidoreductase gliT-mediated disulfide bridge closure. GliN-mediated amide methylation confers stability to ETP, damping the spontaneous formation of tri- and tetrasulfides. Intracellular dithiol gliotoxin oxidized by gliT is subsequently effluxed by gliA. Gliotoxin contributes to pathogenesis during invasive aspergillosis. In macrophages and neutrophils, gliotoxin showed inhibition of various different cell functions including cytokine production, antigen presentation, phagocytosis, and production of reactive oxygen species. This Aspergillus fumigatus (strain ATCC MYA-4609 / CBS 101355 / FGSC A1100 / Af293) (Neosartorya fumigata) protein is O-methyltransferase gliM.